The chain runs to 250 residues: ATP synthase subunit a (250 aa).

6 consecutive transmembrane segments (helical) span residues 31-51 (SAYMFLSVGVISLLMIGGMAG), 85-105 (FFPLVFSLFMFIAVSNLIGII), 115-135 (LIVTVALALLVFVIVLFYGLY), 144-164 (LFVPSGVPVYILPLVVFIEVI), 194-214 (FVGMLGALGFLGWMGAILPLG), and 217-237 (VAVTALEILVAFLQAYVFTIL).

Belongs to the ATPase A chain family. As to quaternary structure, F-type ATPases have 2 components, CF(1) - the catalytic core - and CF(0) - the membrane proton channel. CF(1) has five subunits: alpha(3), beta(3), gamma(1), delta(1), epsilon(1). CF(0) has four main subunits: a, b, b' and c.

It is found in the cell inner membrane. Key component of the proton channel; it plays a direct role in the translocation of protons across the membrane. In Rhodopseudomonas palustris (strain BisB5), this protein is ATP synthase subunit a.